The primary structure comprises 1100 residues: DNA repair protein RAD1 (1100 aa).

The tract at residues methionine 1–glutamate 47 is disordered. Residues arginine 20–lysine 30 are compositionally biased toward polar residues. The segment covering isoleucine 31–glutamate 47 has biased composition (basic and acidic residues). Serine 613 carries the phosphoserine modification. Residues valine 821–glutamate 901 enclose the ERCC4 domain. Residues glutamate 1063–valine 1100 are disordered. Acidic residues predominate over residues glutamate 1065 to leucine 1076. Serine 1071 is modified (phosphoserine). Threonine 1072 bears the Phosphothreonine mark. The segment covering threonine 1082–valine 1100 has biased composition (basic and acidic residues).

It belongs to the XPF family. Component of the nucleotide excision repair factor 1 (NEF1) complex consisting of RAD1, RAD10 and RAD14. Interacts with SAW1.

The protein resides in the nucleus. Involved in nucleotide excision repair of DNA damaged with UV light, bulky adducts, or cross-linking agents. Along with RAD10 forms an endonuclease that specifically degrades single-stranded DNA. This Saccharomyces cerevisiae (strain ATCC 204508 / S288c) (Baker's yeast) protein is DNA repair protein RAD1 (RAD1).